A 174-amino-acid chain; its full sequence is Balbiani ring protein 1 (174 aa).

A disordered region spans residues 28-174; that stretch reads KCRCTSAGKP…RPEGCGSAMR (147 aa). 8 tandem repeats follow at residues 42 to 52, 53 to 63, 64 to 74, 75 to 85, 124 to 134, 135 to 145, 146 to 156, and 157 to 167. 4 X 11 AA tandem repeats regions lie at residues 42–85 and 124–167; these read EPSK…PRPE. Basic and acidic residues-rich tracts occupy residues 49–100 and 121–159; these read PRPE…EKCA and RKSE…EKPS.

Salivary gland.

It localises to the secreted. Used by the larvae to construct a supramolecular structure, the larval tube. This is Balbiani ring protein 1 (BR1) from Chironomus tentans (Midge).